The primary structure comprises 341 residues: S-adenosylmethionine:tRNA ribosyltransferase-isomerase (341 aa).

The protein belongs to the QueA family. In terms of assembly, monomer.

The protein localises to the cytoplasm. The catalysed reaction is 7-aminomethyl-7-carbaguanosine(34) in tRNA + S-adenosyl-L-methionine = epoxyqueuosine(34) in tRNA + adenine + L-methionine + 2 H(+). The protein operates within tRNA modification; tRNA-queuosine biosynthesis. In terms of biological role, transfers and isomerizes the ribose moiety from AdoMet to the 7-aminomethyl group of 7-deazaguanine (preQ1-tRNA) to give epoxyqueuosine (oQ-tRNA). The protein is S-adenosylmethionine:tRNA ribosyltransferase-isomerase of Clostridium botulinum (strain Okra / Type B1).